Reading from the N-terminus, the 37-residue chain is Protein YnaM (37 aa).

The chain crosses the membrane as a helical span at residues 4 to 24 (ILIITSLLIIFSIFSHALIKL).

The protein resides in the cell inner membrane. This Escherichia coli (strain K12) protein is Protein YnaM.